A 228-amino-acid polypeptide reads, in one-letter code: Cytochrome b5 domain-containing protein 1 (228 aa).

Residues 17-83 enclose the Cytochrome b5 heme-binding domain; the sequence is RRYFTPAEVA…DPKTRDIRKH (67 aa). Residues Tyr52 and His83 each contribute to the heme site.

Belongs to the cytochrome b5 family.

The protein localises to the cytoplasm. The protein resides in the cytoskeleton. Its subcellular location is the cilium axoneme. Its function is as follows. Radial spoke stalk protein that binds heme under oxidizing conditions. Required for the coordinated beating of multiple cilia maybe by functioning in a redox signaling pathway. The polypeptide is Cytochrome b5 domain-containing protein 1 (Homo sapiens (Human)).